The following is a 222-amino-acid chain: DNA mismatch repair protein MutH (222 aa).

It belongs to the MutH family.

The protein resides in the cytoplasm. Its function is as follows. Sequence-specific endonuclease that cleaves unmethylated GATC sequences. It is involved in DNA mismatch repair. This chain is DNA mismatch repair protein MutH, found in Pasteurella multocida (strain Pm70).